We begin with the raw amino-acid sequence, 125 residues long: Large ribosomal subunit protein uL22 (125 aa).

It belongs to the universal ribosomal protein uL22 family. Part of the 50S ribosomal subunit.

Functionally, this protein binds specifically to 23S rRNA; its binding is stimulated by other ribosomal proteins, e.g. L4, L17, and L20. It is important during the early stages of 50S assembly. It makes multiple contacts with different domains of the 23S rRNA in the assembled 50S subunit and ribosome. The globular domain of the protein is located near the polypeptide exit tunnel on the outside of the subunit, while an extended beta-hairpin is found that lines the wall of the exit tunnel in the center of the 70S ribosome. This is Large ribosomal subunit protein uL22 from Acetivibrio thermocellus (strain ATCC 27405 / DSM 1237 / JCM 9322 / NBRC 103400 / NCIMB 10682 / NRRL B-4536 / VPI 7372) (Clostridium thermocellum).